An 86-amino-acid chain; its full sequence is Colicin-E2 immunity protein (86 aa).

This sequence belongs to the colicins ColE2/ColE8/ColE9 and pyocins S1/S2 family.

Its function is as follows. This protein is able to protect a cell, which harbors the plasmid ColE2 encoding colicin E2, against colicin E2. The protein is Colicin-E2 immunity protein (imm) of Escherichia coli.